Reading from the N-terminus, the 359-residue chain is 3-dehydroquinate synthase (359 aa).

Residues 72-77 (EGEIHK), 106-110 (GVIGD), 130-131 (TS), Lys143, Lys152, and 170-173 (CLKT) each bind NAD(+). The Zn(2+) site is built by Glu185, His248, and His264.

Belongs to the sugar phosphate cyclases superfamily. Dehydroquinate synthase family. Co(2+) is required as a cofactor. It depends on Zn(2+) as a cofactor. Requires NAD(+) as cofactor.

It localises to the cytoplasm. The enzyme catalyses 7-phospho-2-dehydro-3-deoxy-D-arabino-heptonate = 3-dehydroquinate + phosphate. Its pathway is metabolic intermediate biosynthesis; chorismate biosynthesis; chorismate from D-erythrose 4-phosphate and phosphoenolpyruvate: step 2/7. Catalyzes the conversion of 3-deoxy-D-arabino-heptulosonate 7-phosphate (DAHP) to dehydroquinate (DHQ). This Dehalococcoides mccartyi (strain ATCC BAA-2100 / JCM 16839 / KCTC 5957 / BAV1) protein is 3-dehydroquinate synthase.